A 483-amino-acid chain; its full sequence is Pre-glycoprotein polyprotein GP complex (483 aa).

A lipid anchor (N-myristoyl glycine; by host) is attached at glycine 2. The Extracellular portion of the chain corresponds to 2-17 (GQLVSFIGEIPAIVHE). The chain crosses the membrane as a helical span at residues 18 to 32 (ALNVALIAVSIIAIM). Residue lysine 33 is a topological domain, cytoplasmic. The helical transmembrane segment at 34–53 (GLINIWKSGLFQLIMFLILA) threads the bilayer. Extracellular-side segments run 54–58 (GRSCS) and 59–422 (ISIG…SLVD). Cysteine 57 provides a ligand contact to Zn(2+). N-linked (GlcNAc...) asparagine; by host glycans are attached at residues asparagine 73, asparagine 88, asparagine 130, and asparagine 179. 5 disulfide bridges follow: cysteine 85-cysteine 223, cysteine 186-cysteine 204, cysteine 269-cysteine 282, cysteine 291-cysteine 300, and cysteine 354-cysteine 375. An N-linked (GlcNAc...) asparagine; by host glycan is attached at asparagine 216. 4 N-linked (GlcNAc...) asparagine; by host glycosylation sites follow: asparagine 355, asparagine 363, asparagine 380, and asparagine 385. The chain crosses the membrane as a helical span at residues 423-443 (LCFWSTLFYTASIFLHLLHIP). Topologically, residues 444–483 (THRHIIGEGCPKPHRLTSDSLCACGFFQLKGRPTRWARIP) are cytoplasmic. The Zn(2+) site is built by histidine 445, histidine 447, cysteine 453, histidine 457, cysteine 465, and cysteine 467.

It belongs to the arenaviridae GPC protein family. Homotetramer; disulfide-linked. In terms of assembly, homotetramer. GP2 homotetramers bind through ionic interactions with GP1 homotetramers to form the GP complex together with the stable signal peptide. The GP-C polyprotein interacts with the host protease MBTPS1/SKI-1 resulting in the polyprotein processing. Specific enzymatic cleavages in vivo yield mature proteins. GP-C polyprotein is cleaved in the endoplasmic reticulum by the host protease MBTPS1. Only cleaved glycoprotein is incorporated into virions. Post-translationally, the SSP remains stably associated with the GP complex following cleavage by signal peptidase and plays crucial roles in the trafficking of GP through the secretory pathway. In terms of processing, myristoylation is necessary for GP2-mediated fusion activity.

The protein localises to the virion membrane. It localises to the host endoplasmic reticulum membrane. Its subcellular location is the host Golgi apparatus membrane. The protein resides in the host cell membrane. Functionally, class I viral fusion protein that directs fusion of viral and host endosomal membranes, leading to delivery of the nucleocapsid into the cytoplasm. Membrane fusion is mediated by irreversible conformational changes induced upon acidification in the endosome. Stable signal peptide (SSP): cleaved and functions as a signal peptide. In addition, it is also retained as the third component of the GP complex. The SSP is required for efficient glycoprotein expression, post-translational maturation cleavage of GP1 and GP2, glycoprotein transport to the cell surface plasma membrane, formation of infectious virus particles, and acid pH-dependent glycoprotein-mediated cell fusion. In terms of biological role, interacts with the host receptor. The sequence is that of Pre-glycoprotein polyprotein GP complex from Peromyscus californicus (California mouse).